The primary structure comprises 199 residues: Imidazoleglycerol-phosphate dehydratase (199 aa).

The protein belongs to the imidazoleglycerol-phosphate dehydratase family.

The protein resides in the cytoplasm. The enzyme catalyses D-erythro-1-(imidazol-4-yl)glycerol 3-phosphate = 3-(imidazol-4-yl)-2-oxopropyl phosphate + H2O. It functions in the pathway amino-acid biosynthesis; L-histidine biosynthesis; L-histidine from 5-phospho-alpha-D-ribose 1-diphosphate: step 6/9. This chain is Imidazoleglycerol-phosphate dehydratase, found in Methylibium petroleiphilum (strain ATCC BAA-1232 / LMG 22953 / PM1).